Reading from the N-terminus, the 378-residue chain is Chaperone protein DnaJ 2 (378 aa).

Residues 4-68 (DYYAVLGVRR…QKKQVYDLGG (65 aa)) enclose the J domain. The segment at 130 to 212 (GTTKDIQVDT…CAGDGRVRSR (83 aa)) adopts a CR-type zinc-finger fold. Positions 143, 146, 160, 163, 186, 189, 200, and 203 each coordinate Zn(2+). CXXCXGXG motif repeat units follow at residues 143–150 (CNTCNGEG), 160–167 (CDMCRGRG), 186–193 (CPQCQGFG), and 200–207 (CPECAGDG). 2 disordered regions span residues 297-319 (RPGT…LRGG) and 351-378 (RGEE…FNGR). The segment covering 358–367 (GQFQPGQQGL) has biased composition (polar residues).

This sequence belongs to the DnaJ family. In terms of assembly, homodimer. Zn(2+) is required as a cofactor.

It localises to the cytoplasm. In terms of biological role, participates actively in the response to hyperosmotic and heat shock by preventing the aggregation of stress-denatured proteins and by disaggregating proteins, also in an autonomous, DnaK-independent fashion. Unfolded proteins bind initially to DnaJ; upon interaction with the DnaJ-bound protein, DnaK hydrolyzes its bound ATP, resulting in the formation of a stable complex. GrpE releases ADP from DnaK; ATP binding to DnaK triggers the release of the substrate protein, thus completing the reaction cycle. Several rounds of ATP-dependent interactions between DnaJ, DnaK and GrpE are required for fully efficient folding. Also involved, together with DnaK and GrpE, in the DNA replication of plasmids through activation of initiation proteins. The polypeptide is Chaperone protein DnaJ 2 (Streptomyces coelicolor (strain ATCC BAA-471 / A3(2) / M145)).